We begin with the raw amino-acid sequence, 130 residues long: MAKAATRSRTKRAKRTVVDGIAHINATFNNTIITITDRQGNGLAWASAGGSGFRGSRKSTPFAAQVASERAGRAALDYGLKNLEVRVKGPGPGRESAVRALNAVGYRITNISDVSPIPHNGCRPPKKRRV.

It belongs to the universal ribosomal protein uS11 family. As to quaternary structure, part of the 30S ribosomal subunit. Interacts with proteins S7 and S18. Binds to IF-3.

Functionally, located on the platform of the 30S subunit, it bridges several disparate RNA helices of the 16S rRNA. Forms part of the Shine-Dalgarno cleft in the 70S ribosome. The sequence is that of Small ribosomal subunit protein uS11 from Alkalilimnicola ehrlichii (strain ATCC BAA-1101 / DSM 17681 / MLHE-1).